Consider the following 514-residue polypeptide: Vacuolar aminopeptidase 1 (514 aa).

Residues 1–45 (MEEQREILEQLKKTLQMLTVEPSKNNQIANEEKEKKENENSWCIL) constitute a propeptide, required for vacuolar localization. Mediates aggregation and vesicle formation in Cvt pathway. 2 N-linked (GlcNAc...) asparagine glycosylation sites follow: Asn107 and Asn110. His132 is a binding site for Zn(2+). Residue His210 coordinates substrate. Zn(2+) contacts are provided by Asp303, Glu339, and Glu340. A substrate-binding site is contributed by Glu339. Position 356 is a phosphoserine (Ser356). Position 385 (Asp385) interacts with Zn(2+). Substrate-binding residues include Asp385 and His388. N-linked (GlcNAc...) asparagine glycosylation occurs at Asn448. His479 provides a ligand contact to Zn(2+).

It belongs to the peptidase M18 family. In terms of assembly, homododecamer. The precursor form of aminopeptidase 1 (prApe1) assembles into dodecamers and further aggregates into higher multimers (the Ape1 complex) in the cytoplasm. The Ape1 complex is disaggregated in the vacuolar lumen, but mature aminopeptidase 1 (mApe1) retains its dodecameric form. Dodecamer assembly in the cytoplasm is essential for formation of an enzymatically active complex. If cytoplasmic homododecamerization of prApe1 is disturbed in mutants, homododecamers of mApe1 will form in the vacuole, but they are enzymatically inactive. Interacts with ATG19. Zn(2+) is required as a cofactor. In terms of processing, synthesized in a precursor form (prApe1) that has an amino-terminal propeptide. The N-terminal extension of the 61 kDa precursor is proteolytically processed in two sequential steps. The first step involves proteinase A (PrA/PEP4) and produces a 55 kDa unstable intermediate (iAPI). The second step involves proteinase B (PrB/PRB1) and converts iAPI into the 50 kDa stable, mature enzyme (mApe1).

It localises to the vacuole. The enzyme catalyses Release of an N-terminal amino acid, preferably a neutral or hydrophobic one, from a polypeptide. Aminoacyl-arylamides are poor substrates.. Strongly and specifically activated by Cl(-) and Br(-), which act as positive allosteric effectors. Inactivated by metal-chelating agents. In terms of biological role, resident vacuolar enzyme that catalyzes the removal of amino acids from the N-terminus of peptides and proteins. Also acts as the major cargo protein of the cytoplasm-to-vacuole targeting (Cvt) pathway. The precursor form of aminopeptidase 1 (prApe1) assembles into dodecamers and the propeptide mediates the aggregation of dodecamers into higher multimers. The multimers are then recognized via the propeptide by their receptor ATG19, and ATG19 further interacts with ATG11, which tethers the APE1-ATG19 complex to the pre-autophagosomal structure (PAS). The cargo-receptor complex (also Cvt complex) is selectively enwrapped by a double-membrane structure termed the Cvt vesicle under vegetative growth conditions and by a similar but larger double-membrane structure termed the autophagosome under nitrogen starvation conditions. The Cvt vesicle or the autophagosome fuses with the vacuolar membrane and release its content in the vacuolar lumen. In the vacuole, prApe1 is processed into mature aminopeptidase 1 (mApe1). The polypeptide is Vacuolar aminopeptidase 1 (Saccharomyces cerevisiae (strain ATCC 204508 / S288c) (Baker's yeast)).